We begin with the raw amino-acid sequence, 209 residues long: FMN-dependent NADH:quinone oxidoreductase (209 aa).

FMN is bound by residues S9 and 15–17; that span reads SNS.

It belongs to the azoreductase type 1 family. In terms of assembly, homodimer. The cofactor is FMN.

The enzyme catalyses 2 a quinone + NADH + H(+) = 2 a 1,4-benzosemiquinone + NAD(+). It carries out the reaction N,N-dimethyl-1,4-phenylenediamine + anthranilate + 2 NAD(+) = 2-(4-dimethylaminophenyl)diazenylbenzoate + 2 NADH + 2 H(+). Functionally, quinone reductase that provides resistance to thiol-specific stress caused by electrophilic quinones. In terms of biological role, also exhibits azoreductase activity. Catalyzes the reductive cleavage of the azo bond in aromatic azo compounds to the corresponding amines. In Bordetella bronchiseptica (strain ATCC BAA-588 / NCTC 13252 / RB50) (Alcaligenes bronchisepticus), this protein is FMN-dependent NADH:quinone oxidoreductase.